We begin with the raw amino-acid sequence, 209 residues long: Protease (209 aa).

Active-site residues include His-60, Asp-77, and Cys-127.

Belongs to the peptidase C5 family. Interacts with protease cofactor pVI-C; this interaction is necessary for protease activation.

Its subcellular location is the virion. It localises to the host nucleus. The catalysed reaction is Cleaves proteins of the adenovirus and its host cell at two consensus sites: -Yaa-Xaa-Gly-Gly-|-Xaa- and -Yaa-Xaa-Gly-Xaa-|-Gly- (in which Yaa is Met, Ile or Leu, and Xaa is any amino acid).. Its activity is regulated as follows. Requires DNA and protease cofactor for maximal activation. Inside nascent virions, becomes partially activated by binding to the viral DNA, allowing it to cleave the cofactor that binds to the protease and fully activates it. Actin, like the viral protease cofactor, seems to act as a cofactor in the cleavage of cytokeratin 18 and of actin itself. Cleaves viral precursor proteins (pTP, pIIIa, pVI, pVII, pVIII, and pX) inside newly assembled particles giving rise to mature virions. Protease complexed to its cofactor slides along the viral DNA to specifically locate and cleave the viral precursors. Mature virions have a weakened organization compared to the unmature virions, thereby facilitating subsequent uncoating. Without maturation, the particle lacks infectivity and is unable to uncoat. Late in adenovirus infection, in the cytoplasm, may participate in the cytoskeleton destruction. Cleaves host cell cytoskeletal keratins K7 and K18. This Homo sapiens (Human) protein is Protease.